We begin with the raw amino-acid sequence, 766 residues long: 5-methyltetrahydropteroyltriglutamate--homocysteine methyltransferase (766 aa).

5-methyltetrahydropteroyltri-L-glutamate contacts are provided by residues 16–19 and K119; that span reads RELK. L-homocysteine contacts are provided by residues 440–442 and E493; that span reads IGS. Residues 440–442 and E493 contribute to the L-methionine site; that span reads IGS. 5-methyltetrahydropteroyltri-L-glutamate is bound by residues 524 to 525 and W570; that span reads RC. D608 provides a ligand contact to L-homocysteine. D608 contributes to the L-methionine binding site. E614 contacts 5-methyltetrahydropteroyltri-L-glutamate. Residues H650, C652, and E674 each coordinate Zn(2+). H703 acts as the Proton donor in catalysis. C735 is a binding site for Zn(2+).

This sequence belongs to the vitamin-B12 independent methionine synthase family. It depends on Zn(2+) as a cofactor.

The enzyme catalyses 5-methyltetrahydropteroyltri-L-glutamate + L-homocysteine = tetrahydropteroyltri-L-glutamate + L-methionine. It functions in the pathway amino-acid biosynthesis; L-methionine biosynthesis via de novo pathway; L-methionine from L-homocysteine (MetE route): step 1/1. Its function is as follows. Catalyzes the transfer of a methyl group from 5-methyltetrahydrofolate to homocysteine resulting in methionine formation. The polypeptide is 5-methyltetrahydropteroyltriglutamate--homocysteine methyltransferase (Pseudomonas aeruginosa (strain LESB58)).